The chain runs to 448 residues: UPF0210 protein PAE3581 (448 aa).

It belongs to the UPF0210 family.

This is UPF0210 protein PAE3581 from Pyrobaculum aerophilum (strain ATCC 51768 / DSM 7523 / JCM 9630 / CIP 104966 / NBRC 100827 / IM2).